We begin with the raw amino-acid sequence, 249 residues long: Segregation and condensation protein A (249 aa).

It belongs to the ScpA family. Component of a cohesin-like complex composed of ScpA, ScpB and the Smc homodimer, in which ScpA and ScpB bind to the head domain of Smc. The presence of the three proteins is required for the association of the complex with DNA.

The protein resides in the cytoplasm. In terms of biological role, participates in chromosomal partition during cell division. May act via the formation of a condensin-like complex containing Smc and ScpB that pull DNA away from mid-cell into both cell halves. This is Segregation and condensation protein A from Mycoplasmopsis pulmonis (strain UAB CTIP) (Mycoplasma pulmonis).